Consider the following 211-residue polypeptide: 7-carboxy-7-deazaguanine synthase (211 aa).

Substrate contacts are provided by residues 22–24 (LQG) and Arg-37. The 184-residue stretch at 28 to 211 (NTGMPSVFVR…LQTHKLIGIE (184 aa)) folds into the Radical SAM core domain. Residues Cys-41, Cys-45, and Cys-48 each coordinate [4Fe-4S] cluster. Thr-50 provides a ligand contact to Mg(2+). Thr-78 contributes to the substrate binding site. S-adenosyl-L-methionine contacts are provided by residues Gly-80 and 122–124 (SPK).

This sequence belongs to the radical SAM superfamily. 7-carboxy-7-deazaguanine synthase family. In terms of assembly, homodimer. [4Fe-4S] cluster is required as a cofactor. It depends on S-adenosyl-L-methionine as a cofactor. Mg(2+) serves as cofactor.

The catalysed reaction is 6-carboxy-5,6,7,8-tetrahydropterin + H(+) = 7-carboxy-7-deazaguanine + NH4(+). It participates in purine metabolism; 7-cyano-7-deazaguanine biosynthesis. Functionally, catalyzes the complex heterocyclic radical-mediated conversion of 6-carboxy-5,6,7,8-tetrahydropterin (CPH4) to 7-carboxy-7-deazaguanine (CDG), a step common to the biosynthetic pathways of all 7-deazapurine-containing compounds. This is 7-carboxy-7-deazaguanine synthase from Haemophilus influenzae (strain ATCC 51907 / DSM 11121 / KW20 / Rd).